Here is a 251-residue protein sequence, read N- to C-terminus: Hydroxyacylglutathione hydrolase (251 aa).

Residues H53, H55, D57, H58, H110, D127, and H165 each contribute to the Zn(2+) site.

The protein belongs to the metallo-beta-lactamase superfamily. Glyoxalase II family. In terms of assembly, monomer. Zn(2+) serves as cofactor.

The catalysed reaction is an S-(2-hydroxyacyl)glutathione + H2O = a 2-hydroxy carboxylate + glutathione + H(+). The protein operates within secondary metabolite metabolism; methylglyoxal degradation; (R)-lactate from methylglyoxal: step 2/2. In terms of biological role, thiolesterase that catalyzes the hydrolysis of S-D-lactoyl-glutathione to form glutathione and D-lactic acid. This is Hydroxyacylglutathione hydrolase from Klebsiella pneumoniae subsp. pneumoniae (strain ATCC 700721 / MGH 78578).